The primary structure comprises 61 residues: Photosystem II reaction center protein K (61 aa).

Residues 1–24 (MLNIFSLMYICLNSALYSSSFLFA) constitute a propeptide that is removed on maturation. A helical membrane pass occupies residues 40–60 (MPVIPVLFFLLAFVWQAAVSF).

Belongs to the PsbK family. In terms of assembly, PSII is composed of 1 copy each of membrane proteins PsbA, PsbB, PsbC, PsbD, PsbE, PsbF, PsbH, PsbI, PsbJ, PsbK, PsbL, PsbM, PsbT, PsbX, PsbY, PsbZ, Psb30/Ycf12, at least 3 peripheral proteins of the oxygen-evolving complex and a large number of cofactors. It forms dimeric complexes.

It is found in the plastid. The protein resides in the chloroplast thylakoid membrane. Functionally, one of the components of the core complex of photosystem II (PSII). PSII is a light-driven water:plastoquinone oxidoreductase that uses light energy to abstract electrons from H(2)O, generating O(2) and a proton gradient subsequently used for ATP formation. It consists of a core antenna complex that captures photons, and an electron transfer chain that converts photonic excitation into a charge separation. The sequence is that of Photosystem II reaction center protein K from Citrus sinensis (Sweet orange).